The following is a 445-amino-acid chain: Anaerobilin synthase (445 aa).

The region spanning 52–287 (TASPRKRLVY…LQGCDFMDDA (236 aa)) is the Radical SAM core domain. Y61 is an S-adenosyl-L-methionine binding site. [4Fe-4S] cluster contacts are provided by C67 and C71. F73 lines the S-adenosyl-L-methionine pocket. C74 provides a ligand contact to [4Fe-4S] cluster. S-adenosyl-L-methionine-binding positions include G118, 119-120 (GT), E151, Q178, R190, and D215.

It belongs to the anaerobic coproporphyrinogen-III oxidase family. ChuW/HutW subfamily. The cofactor is [4Fe-4S] cluster.

It carries out the reaction 2 reduced [flavodoxin] + heme b + 2 S-adenosyl-L-methionine = anaerobilin + 2 oxidized [flavodoxin] + Fe(2+) + 5'-deoxyadenosine + L-methionine + S-adenosyl-L-homocysteine. With respect to regulation, inhibited by exposure to molecular oxygen. In terms of biological role, involved in heme degradation and iron utilization under anaerobic conditions. Catalyzes a radical-mediated mechanism facilitating iron liberation and the production of the tetrapyrrole product anaerobilin. Can use heme, mesoheme and deuteroheme as substrates. The protein is Anaerobilin synthase of Escherichia coli O157:H7.